The following is a 271-amino-acid chain: Low choriolytic enzyme (271 aa).

The signal sequence occupies residues 1–20; it reads MDLLAKASVLLLLLLSLSNA. Positions 21 to 71 are cleaved as a propeptide — activation peptide; that stretch reads QTDNMEEAENGSSKEEIDESELEDVSSIIFRMNNNSMEELLEGDLVLPKTR. N-linked (GlcNAc...) asparagine glycans are attached at residues Asn-30 and Asn-54. The region spanning 72-271 is the Peptidase M12A domain; it reads NAMKCFGAPD…ILRVNKLYKC (200 aa). Disulfide bonds link Cys-76/Cys-83, Cys-123/Cys-271, and Cys-144/Cys-164. His-172 serves as a coordination point for Zn(2+). The active site involves Glu-173. Zn(2+)-binding residues include His-176 and His-182. Asn-211 is a glycosylation site (N-linked (GlcNAc...) asparagine).

It depends on Zn(2+) as a cofactor.

It localises to the zymogen granule. The catalysed reaction is Hydrolysis of the inner layer of fish egg envelope. Also hydrolysis of casein and small molecule substrates such as succinyl-Leu-Leu-Val-Tyr-|-7-(4-methyl)coumarylamide.. Its function is as follows. Participates in the breakdown of the egg envelope, which is derived from the egg extracellular matrix, at the time of hatching. Thus allowing the newly hatched fish to swim free. LCE solubilizes the egg envelope only after it has been swollen by the action of HCE. In Oryzias latipes (Japanese rice fish), this protein is Low choriolytic enzyme (lce).